The following is a 507-amino-acid chain: Maturase K (507 aa).

This sequence belongs to the intron maturase 2 family. MatK subfamily.

The protein localises to the plastid. The protein resides in the chloroplast. In terms of biological role, usually encoded in the trnK tRNA gene intron. Probably assists in splicing its own and other chloroplast group II introns. The polypeptide is Maturase K (Kalmia procumbens (Alpine azalea)).